Here is a 65-residue protein sequence, read N- to C-terminus: Large ribosomal subunit protein bL35 (65 aa).

This sequence belongs to the bacterial ribosomal protein bL35 family.

The chain is Large ribosomal subunit protein bL35 from Porphyromonas gingivalis (strain ATCC 33277 / DSM 20709 / CIP 103683 / JCM 12257 / NCTC 11834 / 2561).